The primary structure comprises 233 residues: ATP-dependent dethiobiotin synthetase BioD (233 aa).

ATP is bound at residue 12–17 (EVGKTY). Mg(2+) is bound at residue Thr16. Lys37 is a catalytic residue. ATP-binding positions include Asp54, 120-123 (EGAG), and 186-187 (ND). Positions 54 and 120 each coordinate Mg(2+).

This sequence belongs to the dethiobiotin synthetase family. As to quaternary structure, homodimer. Requires Mg(2+) as cofactor.

It localises to the cytoplasm. The catalysed reaction is (7R,8S)-7,8-diammoniononanoate + CO2 + ATP = (4R,5S)-dethiobiotin + ADP + phosphate + 3 H(+). The protein operates within cofactor biosynthesis; biotin biosynthesis; biotin from 7,8-diaminononanoate: step 1/2. Catalyzes a mechanistically unusual reaction, the ATP-dependent insertion of CO2 between the N7 and N8 nitrogen atoms of 7,8-diaminopelargonic acid (DAPA, also called 7,8-diammoniononanoate) to form a ureido ring. This is ATP-dependent dethiobiotin synthetase BioD from Alteromonas mediterranea (strain DSM 17117 / CIP 110805 / LMG 28347 / Deep ecotype).